A 192-amino-acid polypeptide reads, in one-letter code: Large ribosomal subunit protein bL9 (192 aa).

A disordered region spans residues 173–192; that stretch reads ALRPEDFFDPEADGVDEDEA. Acidic residues predominate over residues 179 to 192; the sequence is FFDPEADGVDEDEA.

Belongs to the bacterial ribosomal protein bL9 family.

In terms of biological role, binds to the 23S rRNA. This is Large ribosomal subunit protein bL9 (rplI) from Rhizobium leguminosarum bv. trifolii.